Reading from the N-terminus, the 1100-residue chain is DNA-directed RNA polymerase subunit beta (1100 aa).

Positions 1064 to 1100 (YEEDKEVDLMADVNQRRTPSRPTYESMSVGDIDDDDD) are disordered. The segment covering 1079-1089 (RRTPSRPTYES) has biased composition (polar residues).

It belongs to the RNA polymerase beta chain family. In terms of assembly, in cyanobacteria the RNAP catalytic core is composed of 2 alpha, 1 beta, 1 beta', 1 gamma and 1 omega subunit. When a sigma factor is associated with the core the holoenzyme is formed, which can initiate transcription.

The catalysed reaction is RNA(n) + a ribonucleoside 5'-triphosphate = RNA(n+1) + diphosphate. Functionally, DNA-dependent RNA polymerase catalyzes the transcription of DNA into RNA using the four ribonucleoside triphosphates as substrates. This is DNA-directed RNA polymerase subunit beta from Synechococcus elongatus (strain ATCC 33912 / PCC 7942 / FACHB-805) (Anacystis nidulans R2).